Here is a 172-residue protein sequence, read N- to C-terminus: S-ribosylhomocysteine lyase (172 aa).

Positions 54, 58, and 128 each coordinate Fe cation.

The protein belongs to the LuxS family. In terms of assembly, homodimer. Fe cation serves as cofactor.

The enzyme catalyses S-(5-deoxy-D-ribos-5-yl)-L-homocysteine = (S)-4,5-dihydroxypentane-2,3-dione + L-homocysteine. Involved in the synthesis of autoinducer 2 (AI-2) which is secreted by bacteria and is used to communicate both the cell density and the metabolic potential of the environment. The regulation of gene expression in response to changes in cell density is called quorum sensing. Catalyzes the transformation of S-ribosylhomocysteine (RHC) to homocysteine (HC) and 4,5-dihydroxy-2,3-pentadione (DPD). This Aliivibrio salmonicida (strain LFI1238) (Vibrio salmonicida (strain LFI1238)) protein is S-ribosylhomocysteine lyase.